A 236-amino-acid chain; its full sequence is Serine/arginine-rich SC35-like splicing factor SCL28 (236 aa).

2 disordered regions span residues Met-1–Asn-53 and Glu-124–Thr-219. Residues Arg-14–Ser-43 show a composition bias toward basic and acidic residues. Residues Ser-47–Glu-125 enclose the RRM domain. A compositionally biased stretch (basic residues) spans Thr-149 to Lys-176. A Phosphoserine modification is found at Ser-184. Positions Arg-199–Val-217 are enriched in basic and acidic residues.

Belongs to the splicing factor SR family. SCL subfamily. In terms of assembly, component of the spliceosome. Interacts with RS2Z33, CYP59, CYP63 and CYP95.

The protein resides in the nucleus speckle. Involved in intron recognition and spliceosome assembly. Probably active at the 5' splice sites. The protein is Serine/arginine-rich SC35-like splicing factor SCL28 (SCL28) of Arabidopsis thaliana (Mouse-ear cress).